A 305-amino-acid polypeptide reads, in one-letter code: Large ribosomal subunit protein uL2m (305 aa).

A mitochondrion-targeting transit peptide spans 1–60 (MALCALTRALRSLNLAPPTVAAPAPSLFPAAQMMNNGLLQQPSALMLLPCRPVLTSVALN). Positions 264–283 (RWLGKRPNSGRWHRKGGWAG) are disordered. Positions 274-283 (RWHRKGGWAG) are enriched in basic residues.

This sequence belongs to the universal ribosomal protein uL2 family. Component of the mitochondrial large ribosomal subunit (mt-LSU). Mature mammalian 55S mitochondrial ribosomes consist of a small (28S) and a large (39S) subunit. The 28S small subunit contains a 12S ribosomal RNA (12S mt-rRNA) and 30 different proteins. The 39S large subunit contains a 16S rRNA (16S mt-rRNA), a copy of mitochondrial valine transfer RNA (mt-tRNA(Val)), which plays an integral structural role, and 52 different proteins.

The protein localises to the mitochondrion. The sequence is that of Large ribosomal subunit protein uL2m (MRPL2) from Homo sapiens (Human).